Consider the following 239-residue polypeptide: ATP-dependent dethiobiotin synthetase BioD (239 aa).

Position 13-18 (13-18 (EIGKTV)) interacts with ATP. Threonine 17 is a binding site for Mg(2+). The active site involves lysine 38. Threonine 42 contacts substrate. Residues lysine 59 and glutamate 111 each contribute to the Mg(2+) site. ATP contacts are provided by residues 111-114 (EGAG), 175-176 (NQ), and 204-206 (PSL).

It belongs to the dethiobiotin synthetase family. In terms of assembly, homodimer. The cofactor is Mg(2+).

The protein resides in the cytoplasm. The catalysed reaction is (7R,8S)-7,8-diammoniononanoate + CO2 + ATP = (4R,5S)-dethiobiotin + ADP + phosphate + 3 H(+). Its pathway is cofactor biosynthesis; biotin biosynthesis; biotin from 7,8-diaminononanoate: step 1/2. Its function is as follows. Catalyzes a mechanistically unusual reaction, the ATP-dependent insertion of CO2 between the N7 and N8 nitrogen atoms of 7,8-diaminopelargonic acid (DAPA, also called 7,8-diammoniononanoate) to form a ureido ring. In Geobacillus sp. (strain WCH70), this protein is ATP-dependent dethiobiotin synthetase BioD.